The primary structure comprises 185 residues: MKMIVGLGNPGSKYAKTKHNIGFMVIDQLCEKYNVTLNKHDFEAEYGSFKYEGETVLLVKPLTFMNDSGRSVGPLMSYYQVGIDELLVIQDDMDLTMGKLRLRQKGSAGGHNGIKSIIAHTKSQTFKRLKIGIQHPQKSTVVNWVLTPFDKDGAPVINQAIDQACEAIDDWCQNDDFMKTMNKFN.

Y14 is a tRNA binding site. H19 serves as the catalytic Proton acceptor. Residues F64, N66, and N112 each contribute to the tRNA site.

It belongs to the PTH family. In terms of assembly, monomer.

Its subcellular location is the cytoplasm. The catalysed reaction is an N-acyl-L-alpha-aminoacyl-tRNA + H2O = an N-acyl-L-amino acid + a tRNA + H(+). Its function is as follows. Hydrolyzes ribosome-free peptidyl-tRNAs (with 1 or more amino acids incorporated), which drop off the ribosome during protein synthesis, or as a result of ribosome stalling. In terms of biological role, catalyzes the release of premature peptidyl moieties from peptidyl-tRNA molecules trapped in stalled 50S ribosomal subunits, and thus maintains levels of free tRNAs and 50S ribosomes. The sequence is that of Peptidyl-tRNA hydrolase from Latilactobacillus sakei subsp. sakei (strain 23K) (Lactobacillus sakei subsp. sakei).